The sequence spans 1785 residues: BCL-6 corepressor-like protein 1 (1785 aa).

Disordered regions lie at residues 65 to 101 (VGSGSNARGADPDGSATEKLGHKSEDKPDDPQPKMDY), 113 to 137 (VPLSSPGDGLKLPASDSAEASNSRA), and 343 to 368 (ASTPPAAPAPPSVPMPTPTPSSGPPS). Residues 83–97 (KLGHKSEDKPDDPQP) are compositionally biased toward basic and acidic residues. The residue at position 496 (serine 496) is a Phosphoserine. 2 stretches are compositionally biased toward polar residues: residues 527-539 (PCTSPSGSTTTQP) and 586-600 (GTEQQTEGTSVTFSP). Disordered stretches follow at residues 527 to 550 (PCTSPSGSTTTQPAPDGVPGPLAD) and 562 to 646 (PTPQ…PMPV). Serine 599 and serine 613 each carry phosphoserine. Lysine 747 participates in a covalent cross-link: Glycyl lysine isopeptide (Lys-Gly) (interchain with G-Cter in SUMO2). Disordered regions lie at residues 753–781 (IIDQGEPKGTGATCGKKGSQAGAEGQPST), 876–901 (SSSEAVHGLPEGQPRPGGSFVPEQDP), and 937–977 (VQPS…LKLA). Phosphoserine is present on residues serine 1029 and serine 1033. Lysine 1092 is covalently cross-linked (Glycyl lysine isopeptide (Lys-Gly) (interchain with G-Cter in SUMO2)). Disordered stretches follow at residues 1107-1293 (PDDV…QGRR) and 1312-1487 (WDTN…PEAR). Serine 1162 is modified (phosphoserine). Basic residues predominate over residues 1176 to 1185 (VRGKHKHRKP). Residues 1195 to 1213 (KRADSHEEGSLEKKAKSSF) are compositionally biased toward basic and acidic residues. A compositionally biased stretch (polar residues) spans 1222–1234 (STRTRSQSGSICS). The span at 1271 to 1284 (TQRDTQYRSHHAQD) shows a compositional bias: basic and acidic residues. Residues 1314–1324 (TNEEEEEEEEE) are compositionally biased toward acidic residues. The short motif at 1328–1336 (KRKKRRRQK) is the Nuclear localization signal element. Over residues 1328-1339 (KRKKRRRQKSRK) the composition is skewed to basic residues. Positions 1352–1363 (EQRRKGRADLKA) are enriched in basic and acidic residues. Positions 1440-1449 (WSQQKTRSPK) are enriched in polar residues. A compositionally biased stretch (low complexity) spans 1461–1480 (TPSKSRSASSEEASESPTAR). A Phosphoserine modification is found at serine 1476. ANK repeat units follow at residues 1529 to 1558 (AGYTALHEACSRGWTDILNILLEHGANVNC), 1562 to 1591 (DGTRPVHDAVVNDNLETIWLLLSYGADPTL), and 1595 to 1623 (SGQTAMKLASSDTMKRFLSDHLSDLQGRA). The PCGF Ub-like fold domain (PUFD); required for the interaction with the KDM2B-SKP1 heterodimeric complex stretch occupies residues 1668–1785 (DDFMFELSDK…SEVEFQSCNS (118 aa)).

Belongs to the BCOR family. In terms of assembly, interacts with PCGF1, forming heterodimers. The PCGF1-BCORL1 heterodimeric complex interacts with the KDM2B-SKP1 heterodimeric complex to form a homotetrameric polycomb repression complex 1 (PRC1.1). Interacts with SKP1. Interacts with CTBP1, HDAC4, HDAC5 and HDAC7. In terms of tissue distribution, detected in testis and prostate. Detected at lower levels in peripheral blood leukocytes and spleen. Mainly expressed in the spermatogonia and primary spermatocytes.

Its subcellular location is the nucleus. Functionally, transcriptional corepressor. May specifically inhibit gene expression when recruited to promoter regions by sequence-specific DNA-binding proteins such as BCL6. This repression may be mediated at least in part by histone deacetylase activities which can associate with this corepressor. In Homo sapiens (Human), this protein is BCL-6 corepressor-like protein 1.